The sequence spans 790 residues: Probable E3 ubiquitin-protein ligase MARCHF10 (790 aa).

The disordered stretch occupies residues 33–240 (LKRQEHKKEP…PQNEPHTALS (208 aa)). The span at 34–48 (KRQEHKKEPNEKKQE) shows a compositional bias: basic and acidic residues. Residues 61–70 (FSSGSSCKQS) are compositionally biased toward low complexity. The residue at position 78 (serine 78) is a Phosphoserine. Residues 218 to 227 (PLERQKKGDP) are compositionally biased toward basic and acidic residues. The segment covering 230–240 (RPQNEPHTALS) has biased composition (polar residues). Residues 284-308 (LSLNNEQENYDTEEETRTEEELLLA) adopt a coiled-coil conformation. Disordered stretches follow at residues 323 to 416 (GTSA…EDVS) and 507 to 569 (LSPI…RHLQ). 3 stretches are compositionally biased toward polar residues: residues 355-370 (RKTS…SSPG), 406-416 (GVTQVSAEDVS), and 511-520 (RNRNPSAASE). The span at 521–533 (SHSEDTQGEEERA) shows a compositional bias: basic and acidic residues. The span at 534-563 (STSQAQESPLLSDLPNPQSSMALGDSPSSP) shows a compositional bias: polar residues. The RING-CH-type zinc finger occupies 633–703 (DSEEEGDLCR…EMCKQGLLVD (71 aa)). Zn(2+)-binding residues include cysteine 641, cysteine 644, cysteine 659, cysteine 661, histidine 669, cysteine 672, cysteine 693, and cysteine 696. The interval 757-790 (ERMSRNYPQPRPEESESSESGDGNESNVYPGRVI) is disordered. Positions 774-783 (SESGDGNESN) are enriched in low complexity.

It catalyses the reaction S-ubiquitinyl-[E2 ubiquitin-conjugating enzyme]-L-cysteine + [acceptor protein]-L-lysine = [E2 ubiquitin-conjugating enzyme]-L-cysteine + N(6)-ubiquitinyl-[acceptor protein]-L-lysine.. It participates in protein modification; protein ubiquitination. Its function is as follows. E3 ubiquitin-protein ligase. E3 ubiquitin ligases accept ubiquitin from an E2 ubiquitin-conjugating enzyme in the form of a thioester and then directly transfer the ubiquitin to targeted substrates. This is Probable E3 ubiquitin-protein ligase MARCHF10 (Marchf10) from Rattus norvegicus (Rat).